The following is a 154-amino-acid chain: Large ribosomal subunit protein uL30 (154 aa).

Positions 114 to 139 are disordered; it reads PTLRLHPPRGGHDGIKHPTKEGGQLG. Basic and acidic residues predominate over residues 123-133; that stretch reads GGHDGIKHPTK.

The protein belongs to the universal ribosomal protein uL30 family. Part of the 50S ribosomal subunit.

In Natronomonas pharaonis (strain ATCC 35678 / DSM 2160 / CIP 103997 / JCM 8858 / NBRC 14720 / NCIMB 2260 / Gabara) (Halobacterium pharaonis), this protein is Large ribosomal subunit protein uL30.